The sequence spans 365 residues: Eukaryotic translation initiation factor 3 subunit H (365 aa).

An MPN domain is found at 15–166; the sequence is ILLDSLVVMK…LRAWRLSTAA (152 aa).

It belongs to the eIF-3 subunit H family. In terms of assembly, component of the eukaryotic translation initiation factor 3 (eIF-3) complex.

It localises to the cytoplasm. In terms of biological role, component of the eukaryotic translation initiation factor 3 (eIF-3) complex, which is involved in protein synthesis of a specialized repertoire of mRNAs and, together with other initiation factors, stimulates binding of mRNA and methionyl-tRNAi to the 40S ribosome. The eIF-3 complex specifically targets and initiates translation of a subset of mRNAs involved in cell proliferation. In Caenorhabditis elegans, this protein is Eukaryotic translation initiation factor 3 subunit H.